Reading from the N-terminus, the 217-residue chain is Ras-related protein Rab-19 (217 aa).

Residues S26, V28, G29, K30, T31, C32, Y42, S43, E44, S45, and T49 each coordinate GTP. T31 contacts Mg(2+). The Switch 1 motif lies at 39 to 54 (SGVYSESQQNTIGVDF). T49 and D72 together coordinate Mg(2+). Positions 74–89 (AGQERFRTITQSYYRS) match the Switch 2 motif. GTP contacts are provided by G75, N130, K131, D133, S161, A162, and K163. S-geranylgeranyl cysteine attachment occurs at residues C215 and C217. C217 bears the Cysteine methyl ester mark.

It belongs to the small GTPase superfamily. Rab family. Mg(2+) serves as cofactor. As to expression, expressed in a tissue-specific manner. Detected at high levels in intestine, lung and spleen, and at a lower level in kidney.

It is found in the cell membrane. The enzyme catalyses GTP + H2O = GDP + phosphate + H(+). Regulated by guanine nucleotide exchange factors (GEFs) which promote the exchange of bound GDP for free GTP. Regulated by GTPase activating proteins (GAPs) which increase the GTP hydrolysis activity. Inhibited by GDP dissociation inhibitors (GDIs). Functionally, the small GTPases Rab are key regulators of intracellular membrane trafficking, from the formation of transport vesicles to their fusion with membranes. Rabs cycle between an inactive GDP-bound form and an active GTP-bound form that is able to recruit to membranes different set of downstream effectors directly responsible for vesicle formation, movement, tethering and fusion. This is Ras-related protein Rab-19 from Mus musculus (Mouse).